Consider the following 95-residue polypeptide: Large ribosomal subunit protein bL25 (95 aa).

Belongs to the bacterial ribosomal protein bL25 family. In terms of assembly, part of the 50S ribosomal subunit; part of the 5S rRNA/L5/L18/L25 subcomplex. Contacts the 5S rRNA. Binds to the 5S rRNA independently of L5 and L18.

Functionally, this is one of the proteins that binds to the 5S RNA in the ribosome where it forms part of the central protuberance. The chain is Large ribosomal subunit protein bL25 from Mannheimia succiniciproducens (strain KCTC 0769BP / MBEL55E).